Reading from the N-terminus, the 581-residue chain is Adenine deaminase (581 aa).

This sequence belongs to the metallo-dependent hydrolases superfamily. Adenine deaminase family. Mn(2+) serves as cofactor.

It carries out the reaction adenine + H2O + H(+) = hypoxanthine + NH4(+). This Brucella melitensis biotype 1 (strain ATCC 23456 / CCUG 17765 / NCTC 10094 / 16M) protein is Adenine deaminase.